The primary structure comprises 442 residues: O-methyltransferase pgmB (442 aa).

Asp291 provides a ligand contact to S-adenosyl-L-methionine. The active-site Proton acceptor is His341.

It belongs to the class I-like SAM-binding methyltransferase superfamily. Cation-independent O-methyltransferase family.

The protein operates within pigment biosynthesis. It functions in the pathway secondary metabolite biosynthesis. O-methyltransferase; part of the gene cluster that mediates the biosynthesis of pleosporalin A, ascomycone A, as well as a third cryptic naphthoquinone derived pigment, all responsible for the coloration of conidia. Specifically methylates position C-6 of the pgmA product 3-acetonyl-1,6,8-trihydroxy-2-naphthaldehyde to yield fusarubinaldehyde. The pathway begins with the biosynthesis of the cyclized heptaketide 3-acetonyl-1,6,8-trihydroxy-2-naphthaldehyde by the NR-PKS pgmA. The C-6 hydroxyl group is further methylated by the O-methyltransferase pgmB to yield fusarubinaldehyde which is in turn oxidized by the cytochrome P450 monooxygenase pgmC at C-9. The C-1 hydroxyl group is then methylated spontaneously. Although pgmE, pgmD and pgmH are essential for the production of pleosporalin A, it is not the case for the 2 other final products and it remains difficult to assign a specific function to each enzyme. PgmF and pgmG seem not to be involved in pigment biosynthesis although they were regulated by the cluster-specific transcription factor pgmR. This is O-methyltransferase pgmB from Aspergillus terreus.